A 246-amino-acid chain; its full sequence is Ribonuclease 3 (246 aa).

Residues 20-145 (FSKLEKILGF…FVGAIYLDRG (126 aa)) form the RNase III domain. Residue glutamate 62 coordinates Mg(2+). Aspartate 66 is an active-site residue. Mg(2+) contacts are provided by asparagine 131 and glutamate 134. Glutamate 134 is an active-site residue. In terms of domain architecture, DRBM spans 173 to 241 (SYKSLLIEWC…SKRGYFVFQS (69 aa)).

It belongs to the ribonuclease III family. As to quaternary structure, homodimer. Mg(2+) is required as a cofactor.

It localises to the cytoplasm. It catalyses the reaction Endonucleolytic cleavage to 5'-phosphomonoester.. In terms of biological role, digests double-stranded RNA. Involved in the processing of primary rRNA transcript to yield the immediate precursors to the large and small rRNAs (23S and 16S). Processes some mRNAs, and tRNAs when they are encoded in the rRNA operon. Processes pre-crRNA and tracrRNA of type II CRISPR loci if present in the organism. In Flavobacterium psychrophilum (strain ATCC 49511 / DSM 21280 / CIP 103535 / JIP02/86), this protein is Ribonuclease 3.